The chain runs to 370 residues: Putative phosphoserine aminotransferase (370 aa).

Residues 1-22 (MAELTIPADLKPRDGRFGSGPS) are disordered. R44 provides a ligand contact to L-glutamate. Pyridoxal 5'-phosphate-binding residues include F102, T148, D170, and Q193. N6-(pyridoxal phosphate)lysine is present on K194. 245-246 (NT) contacts pyridoxal 5'-phosphate.

The protein belongs to the class-V pyridoxal-phosphate-dependent aminotransferase family. SerC subfamily. Homodimer. The cofactor is pyridoxal 5'-phosphate.

It localises to the cytoplasm. It carries out the reaction O-phospho-L-serine + 2-oxoglutarate = 3-phosphooxypyruvate + L-glutamate. It catalyses the reaction 4-(phosphooxy)-L-threonine + 2-oxoglutarate = (R)-3-hydroxy-2-oxo-4-phosphooxybutanoate + L-glutamate. Its pathway is amino-acid biosynthesis; L-serine biosynthesis; L-serine from 3-phospho-D-glycerate: step 2/3. It participates in cofactor biosynthesis; pyridoxine 5'-phosphate biosynthesis; pyridoxine 5'-phosphate from D-erythrose 4-phosphate: step 3/5. Its function is as follows. Catalyzes the reversible conversion of 3-phosphohydroxypyruvate to phosphoserine and of 3-hydroxy-2-oxo-4-phosphonooxybutanoate to phosphohydroxythreonine. This Mycobacterium sp. (strain JLS) protein is Putative phosphoserine aminotransferase.